A 156-amino-acid chain; its full sequence is Cyanate hydratase (156 aa).

Active-site residues include arginine 96, glutamate 99, and serine 122.

It belongs to the cyanase family.

It carries out the reaction cyanate + hydrogencarbonate + 3 H(+) = NH4(+) + 2 CO2. Catalyzes the reaction of cyanate with bicarbonate to produce ammonia and carbon dioxide. This Burkholderia lata (strain ATCC 17760 / DSM 23089 / LMG 22485 / NCIMB 9086 / R18194 / 383) protein is Cyanate hydratase.